The following is a 484-amino-acid chain: Ureidoglycolate hydrolase (484 aa).

The signal sequence occupies residues 1 to 28 (MATSAAARFLAALAGAAVLLVLLGGAAG). Mn(2+) contacts are provided by His-148, Asp-159, Glu-194, and His-262. Substrate stretches follow at residues 193 to 194 (EE) and 262 to 265 (HIEQ). The interval 284-399 (APASIKVEFE…LSEFKIINQD (116 aa)) is involved in dimerization. 3 residues coordinate substrate: His-298, Asn-348, and Arg-361. Residues 431–432 (YH) are substrate. His-456 serves as a coordination point for Mn(2+). A substrate-binding site is contributed by His-456.

This sequence belongs to the peptidase M20 family. As to quaternary structure, homodimer. Requires Mn(2+) as cofactor. Ni(2+) serves as cofactor. The cofactor is Co(2+).

It is found in the endoplasmic reticulum. It carries out the reaction (S)-ureidoglycolate + H2O + 2 H(+) = glyoxylate + 2 NH4(+) + CO2. Its pathway is nitrogen metabolism; (S)-allantoin degradation; glyoxylate from (S)-ureidoglycolate: step 1/1. Involved in the catabolism of purine nucleotides. The sequential activity of AAH, UGLYAH and UAH allows a complete purine breakdown without the intermediate generation of urea. The protein is Ureidoglycolate hydrolase of Oryza sativa subsp. japonica (Rice).